The sequence spans 130 residues: Small ribosomal subunit protein uS8 (130 aa).

Belongs to the universal ribosomal protein uS8 family. In terms of assembly, part of the 30S ribosomal subunit.

In terms of biological role, one of the primary rRNA binding proteins, it binds directly to 16S rRNA central domain where it helps coordinate assembly of the platform of the 30S subunit. The chain is Small ribosomal subunit protein uS8 from Methanoregula boonei (strain DSM 21154 / JCM 14090 / 6A8).